The primary structure comprises 244 residues: Phosphatidylinositol phosphate synthase (244 aa).

3 helical membrane-spanning segments follow: residues 24–42 (YARA…FLIR), 49–66 (TVTL…LVFY), and 72–91 (FWGT…DGNM). A CDP-1,2-diacyl-sn-glycerol is bound at residue 48-51 (DTVT). 2 residues coordinate Mg(2+): Asp85 and Asp88. A CDP-1,2-diacyl-sn-glycerol is bound by residues Gly89, Arg93, and Ser99. Mg(2+) is bound by residues Asp106 and Asp110. Residue Asp110 is the Proton acceptor of the active site. 3 consecutive transmembrane segments (helical) span residues 117-137 (IFGG…LCAV), 174-190 (LVIS…HKFG), and 196-214 (VLLP…VTLI).

It belongs to the CDP-alcohol phosphatidyltransferase class-I family. In terms of assembly, homodimer. Mg(2+) is required as a cofactor.

The protein resides in the cell membrane. It catalyses the reaction a CDP-1,2-diacyl-sn-glycerol + 1D-myo-inositol 3-phosphate = a 1,2-diacyl-sn-glycero-3-phospho-(1D-myo-inositol-3-phosphate) + CMP + H(+). It carries out the reaction 1,2-di-(9Z-octadecenoyl)-sn-glycero-3-cytidine-5'-diphosphate + 1D-myo-inositol 3-phosphate = 1,2-di-(9Z-octadecenoyl)-sn-glycero-3-phospho-(1D-myo-inositol-3-phosphate) + CMP + H(+). The protein operates within phospholipid metabolism; phosphatidylinositol phosphate biosynthesis. Its function is as follows. Catalyzes the conjugation of the 1'-hydroxyl group of D-myo-inositol-3-phosphate (also named L-myo-inositol-1-phosphate) with a lipid tail of cytidine diphosphate diacylglycerol (CDP-DAG), forming phosphatidylinositol phosphate (PIP) and CMP. PIP is a precursor of phosphatidylinositol (PI) which is an essential lipid required for cell wall formation. The sequence is that of Phosphatidylinositol phosphate synthase from Streptomyces avermitilis (strain ATCC 31267 / DSM 46492 / JCM 5070 / NBRC 14893 / NCIMB 12804 / NRRL 8165 / MA-4680).